Consider the following 242-residue polypeptide: Probable transcriptional regulatory protein Bcep18194_A5621 (242 aa).

This sequence belongs to the TACO1 family.

It is found in the cytoplasm. This chain is Probable transcriptional regulatory protein Bcep18194_A5621, found in Burkholderia lata (strain ATCC 17760 / DSM 23089 / LMG 22485 / NCIMB 9086 / R18194 / 383).